The chain runs to 185 residues: Protein GrpE (185 aa).

A disordered region spans residues 1–44 (MSEEELTNGPGPEPQPEPLEVESAPLEAAPAGEPDKALLEAQQQ).

Belongs to the GrpE family. In terms of assembly, homodimer.

Its subcellular location is the cytoplasm. Participates actively in the response to hyperosmotic and heat shock by preventing the aggregation of stress-denatured proteins, in association with DnaK and GrpE. It is the nucleotide exchange factor for DnaK and may function as a thermosensor. Unfolded proteins bind initially to DnaJ; upon interaction with the DnaJ-bound protein, DnaK hydrolyzes its bound ATP, resulting in the formation of a stable complex. GrpE releases ADP from DnaK; ATP binding to DnaK triggers the release of the substrate protein, thus completing the reaction cycle. Several rounds of ATP-dependent interactions between DnaJ, DnaK and GrpE are required for fully efficient folding. The polypeptide is Protein GrpE (Methylococcus capsulatus (strain ATCC 33009 / NCIMB 11132 / Bath)).